Consider the following 198-residue polypeptide: Iron-sulfur flavoprotein MJ0731 (198 aa).

Residues Cys-46, Cys-49, Cys-52, and Cys-59 each contribute to the [4Fe-4S] cluster site.

It belongs to the SsuE family. Isf subfamily. As to quaternary structure, homodimer. Requires FMN as cofactor. The cofactor is [4Fe-4S] cluster.

Functionally, redox-active protein probably involved in electron transport. The chain is Iron-sulfur flavoprotein MJ0731 from Methanocaldococcus jannaschii (strain ATCC 43067 / DSM 2661 / JAL-1 / JCM 10045 / NBRC 100440) (Methanococcus jannaschii).